The primary structure comprises 246 residues: 3-deoxy-manno-octulosonate cytidylyltransferase (246 aa).

This sequence belongs to the KdsB family.

It localises to the cytoplasm. It catalyses the reaction 3-deoxy-alpha-D-manno-oct-2-ulosonate + CTP = CMP-3-deoxy-beta-D-manno-octulosonate + diphosphate. It participates in nucleotide-sugar biosynthesis; CMP-3-deoxy-D-manno-octulosonate biosynthesis; CMP-3-deoxy-D-manno-octulosonate from 3-deoxy-D-manno-octulosonate and CTP: step 1/1. The protein operates within bacterial outer membrane biogenesis; lipopolysaccharide biosynthesis. Its function is as follows. Activates KDO (a required 8-carbon sugar) for incorporation into bacterial lipopolysaccharide in Gram-negative bacteria. The protein is 3-deoxy-manno-octulosonate cytidylyltransferase of Rickettsia felis (strain ATCC VR-1525 / URRWXCal2) (Rickettsia azadi).